A 436-amino-acid polypeptide reads, in one-letter code: GTPase Der (436 aa).

EngA-type G domains lie at 4 to 167 (PIVA…GEEE) and 176 to 351 (IRLS…ENHK). Residues 10–17 (GRPNVGKS), 57–61 (DTGGI), 119–122 (NKVD), 182–189 (GRPNVGKS), 229–233 (DTAGM), and 294–297 (NKWD) each bind GTP. A KH-like domain is found at 352–436 (KRVQSSTLNE…PIHIIARKRN (85 aa)).

The protein belongs to the TRAFAC class TrmE-Era-EngA-EngB-Septin-like GTPase superfamily. EngA (Der) GTPase family. In terms of assembly, associates with the 50S ribosomal subunit.

Its function is as follows. GTPase that plays an essential role in the late steps of ribosome biogenesis. The chain is GTPase Der from Staphylococcus aureus (strain Mu3 / ATCC 700698).